An 800-amino-acid polypeptide reads, in one-letter code: Ribosome-releasing factor 2, mitochondrial (800 aa).

In terms of domain architecture, tr-type G spans 21 to 307 (SKVRNIGIIA…AIANYLPSPS (287 aa)). Residues 30-37 (AHIDAGKT), 95-99 (DTPGH), and 147-150 (NKMD) each bind GTP.

It belongs to the TRAFAC class translation factor GTPase superfamily. Classic translation factor GTPase family. EF-G/EF-2 subfamily.

The protein resides in the mitochondrion. Mitochondrial GTPase that mediates the disassembly of ribosomes from messenger RNA at the termination of mitochondrial protein biosynthesis. Not involved in the GTP-dependent ribosomal translocation step during translation elongation. This Kluyveromyces lactis (strain ATCC 8585 / CBS 2359 / DSM 70799 / NBRC 1267 / NRRL Y-1140 / WM37) (Yeast) protein is Ribosome-releasing factor 2, mitochondrial.